The following is a 561-amino-acid chain: Laccase-1 (561 aa).

The first 20 residues, Met1–Ala20, serve as a signal peptide directing secretion. 2 Plastocyanin-like domains span residues Val68–Thr185 and Asp191–Ser337. Asn71, Asn87, and Asn114 each carry an N-linked (GlcNAc...) asparagine glycan. The Cu cation site is built by His119, His121, His163, and His165. Cys140 and Cys542 are oxidised to a cystine. N-linked (GlcNAc...) asparagine glycosylation is found at Asn226, Asn284, Asn327, Asn391, and Asn398. Positions Leu396–Ser525 constitute a Plastocyanin-like 3 domain. Residues His445, His448, His450, His504, Cys505, His506, and His510 each contribute to the Cu cation site.

The protein belongs to the multicopper oxidase family. Requires Cu cation as cofactor.

It is found in the secreted. It catalyses the reaction 4 hydroquinone + O2 = 4 benzosemiquinone + 2 H2O. Its function is as follows. Lignin degradation and detoxification of lignin-derived products. The sequence is that of Laccase-1 (lcc1) from Botryotinia fuckeliana (Noble rot fungus).